The primary structure comprises 195 residues: Holliday junction branch migration complex subunit RuvA (195 aa).

The domain I stretch occupies residues 1-64 (MIASIRGVIQ…EDALTLYGFS (64 aa)). Positions 65-139 (DNAQRSLFEQ…GKIDFRQLAA (75 aa)) are domain II. The segment at 139 to 143 (ASGST) is flexible linker. Residues 144 to 195 (SVSALDRELSEILVSLGYSAAEAAAAIASLPSDAPPTLEERLRLALRYFGSA) form a domain III region.

This sequence belongs to the RuvA family. Homotetramer. Forms an RuvA(8)-RuvB(12)-Holliday junction (HJ) complex. HJ DNA is sandwiched between 2 RuvA tetramers; dsDNA enters through RuvA and exits via RuvB. An RuvB hexamer assembles on each DNA strand where it exits the tetramer. Each RuvB hexamer is contacted by two RuvA subunits (via domain III) on 2 adjacent RuvB subunits; this complex drives branch migration. In the full resolvosome a probable DNA-RuvA(4)-RuvB(12)-RuvC(2) complex forms which resolves the HJ.

It is found in the cytoplasm. The RuvA-RuvB-RuvC complex processes Holliday junction (HJ) DNA during genetic recombination and DNA repair, while the RuvA-RuvB complex plays an important role in the rescue of blocked DNA replication forks via replication fork reversal (RFR). RuvA specifically binds to HJ cruciform DNA, conferring on it an open structure. The RuvB hexamer acts as an ATP-dependent pump, pulling dsDNA into and through the RuvAB complex. HJ branch migration allows RuvC to scan DNA until it finds its consensus sequence, where it cleaves and resolves the cruciform DNA. The chain is Holliday junction branch migration complex subunit RuvA from Chloroflexus aggregans (strain MD-66 / DSM 9485).